The following is a 310-amino-acid chain: 2-phospho-L-lactate transferase (310 aa).

7,8-didemethyl-8-hydroxy-5-deazariboflavin contacts are provided by Asp-50 and Arg-89.

This sequence belongs to the CofD family. As to quaternary structure, homodimer. Requires Mg(2+) as cofactor.

It catalyses the reaction (2S)-lactyl-2-diphospho-5'-guanosine + 7,8-didemethyl-8-hydroxy-5-deazariboflavin = oxidized coenzyme F420-0 + GMP + H(+). It functions in the pathway cofactor biosynthesis; coenzyme F420 biosynthesis. Its function is as follows. Catalyzes the transfer of the 2-phospholactate moiety from (2S)-lactyl-2-diphospho-5'-guanosine to 7,8-didemethyl-8-hydroxy-5-deazariboflavin (FO) with the formation of oxidized coenzyme F420-0 and GMP. In Methanopyrus kandleri (strain AV19 / DSM 6324 / JCM 9639 / NBRC 100938), this protein is 2-phospho-L-lactate transferase.